We begin with the raw amino-acid sequence, 298 residues long: Lipoyl synthase (298 aa).

7 residues coordinate [4Fe-4S] cluster: cysteine 40, cysteine 45, cysteine 51, cysteine 67, cysteine 71, cysteine 74, and serine 280. A Radical SAM core domain is found at 53–269 (AVRKTATFMI…KEIALSKGFS (217 aa)).

This sequence belongs to the radical SAM superfamily. Lipoyl synthase family. Requires [4Fe-4S] cluster as cofactor.

The protein resides in the cytoplasm. It catalyses the reaction [[Fe-S] cluster scaffold protein carrying a second [4Fe-4S](2+) cluster] + N(6)-octanoyl-L-lysyl-[protein] + 2 oxidized [2Fe-2S]-[ferredoxin] + 2 S-adenosyl-L-methionine + 4 H(+) = [[Fe-S] cluster scaffold protein] + N(6)-[(R)-dihydrolipoyl]-L-lysyl-[protein] + 4 Fe(3+) + 2 hydrogen sulfide + 2 5'-deoxyadenosine + 2 L-methionine + 2 reduced [2Fe-2S]-[ferredoxin]. The protein operates within protein modification; protein lipoylation via endogenous pathway; protein N(6)-(lipoyl)lysine from octanoyl-[acyl-carrier-protein]. Functionally, catalyzes the radical-mediated insertion of two sulfur atoms into the C-6 and C-8 positions of the octanoyl moiety bound to the lipoyl domains of lipoate-dependent enzymes, thereby converting the octanoylated domains into lipoylated derivatives. This chain is Lipoyl synthase, found in Bacillus mycoides (strain KBAB4) (Bacillus weihenstephanensis).